A 594-amino-acid polypeptide reads, in one-letter code: Pentatricopeptide repeat-containing protein At1g15480, mitochondrial (594 aa).

The transit peptide at 1-67 directs the protein to the mitochondrion; it reads MFALSKVLRR…WSSSTGRRSL (67 aa). The span at 62–75 shows a compositional bias: low complexity; the sequence is TGRRSLSSDAGAKT. The segment at 62–109 is disordered; the sequence is TGRRSLSSDAGAKTTGDDDDLEDKNVDLATPDETSSDSEDGEEFSGDE. The span at 95–109 shows a compositional bias: acidic residues; it reads TSSDSEDGEEFSGDE. 7 PPR repeats span residues 226 to 260, 261 to 294, 295 to 329, 330 to 364, 432 to 466, 467 to 502, and 503 to 537; these read GELVYRTLLANHVATSNVRTAEAVFNKMKDLGFPL, STFTCNQMLILYKRVDKKKIADVLLLLEKENLKP, NLNTYKILIDTKGSSNDITGMEQIVETMKSEGVEL, DLRARALIARHYASAGLKEKAEKVLKEMEGESLEE, SSNVYSVLLRVYVDHKMVSEGKDLVKQMSDSGCNI, GALTWDAVIKLYVEAGEVEKAESSLSKAIQSKQIKP, and LMSSFMYLMHEYVRRGDVHNTEKIFQRMKQAGYQS.

Belongs to the PPR family. P subfamily.

The protein resides in the mitochondrion. This Arabidopsis thaliana (Mouse-ear cress) protein is Pentatricopeptide repeat-containing protein At1g15480, mitochondrial.